A 271-amino-acid polypeptide reads, in one-letter code: 2-dehydro-3-deoxyphosphooctonate aldolase (271 aa).

This sequence belongs to the KdsA family.

The protein localises to the cytoplasm. It catalyses the reaction D-arabinose 5-phosphate + phosphoenolpyruvate + H2O = 3-deoxy-alpha-D-manno-2-octulosonate-8-phosphate + phosphate. Its pathway is carbohydrate biosynthesis; 3-deoxy-D-manno-octulosonate biosynthesis; 3-deoxy-D-manno-octulosonate from D-ribulose 5-phosphate: step 2/3. It participates in bacterial outer membrane biogenesis; lipopolysaccharide biosynthesis. This chain is 2-dehydro-3-deoxyphosphooctonate aldolase, found in Campylobacter jejuni subsp. jejuni serotype O:6 (strain 81116 / NCTC 11828).